The chain runs to 274 residues: tRNA-cytidine(32) 2-sulfurtransferase (274 aa).

The PP-loop motif motif lies at Ser-40–Ser-45. [4Fe-4S] cluster contacts are provided by Cys-115, Cys-118, and Cys-206.

This sequence belongs to the TtcA family. Homodimer. The cofactor is Mg(2+). Requires [4Fe-4S] cluster as cofactor.

The protein resides in the cytoplasm. The catalysed reaction is cytidine(32) in tRNA + S-sulfanyl-L-cysteinyl-[cysteine desulfurase] + AH2 + ATP = 2-thiocytidine(32) in tRNA + L-cysteinyl-[cysteine desulfurase] + A + AMP + diphosphate + H(+). The protein operates within tRNA modification. Catalyzes the ATP-dependent 2-thiolation of cytidine in position 32 of tRNA, to form 2-thiocytidine (s(2)C32). The sulfur atoms are provided by the cysteine/cysteine desulfurase (IscS) system. This Pseudomonas fluorescens (strain SBW25) protein is tRNA-cytidine(32) 2-sulfurtransferase.